A 121-amino-acid chain; its full sequence is Large ribosomal subunit protein uL22 (121 aa).

Belongs to the universal ribosomal protein uL22 family. Part of the 50S ribosomal subunit.

Functionally, this protein binds specifically to 23S rRNA; its binding is stimulated by other ribosomal proteins, e.g. L4, L17, and L20. It is important during the early stages of 50S assembly. It makes multiple contacts with different domains of the 23S rRNA in the assembled 50S subunit and ribosome. The globular domain of the protein is located near the polypeptide exit tunnel on the outside of the subunit, while an extended beta-hairpin is found that lines the wall of the exit tunnel in the center of the 70S ribosome. This Beutenbergia cavernae (strain ATCC BAA-8 / DSM 12333 / CCUG 43141 / JCM 11478 / NBRC 16432 / NCIMB 13614 / HKI 0122) protein is Large ribosomal subunit protein uL22.